A 136-amino-acid chain; its full sequence is Large ribosomal subunit protein uL16c (136 aa).

Belongs to the universal ribosomal protein uL16 family. As to quaternary structure, part of the 50S ribosomal subunit.

It localises to the plastid. Its subcellular location is the chloroplast. This Chlamydomonas sp. (strain WXM) protein is Large ribosomal subunit protein uL16c.